Here is a 123-residue protein sequence, read N- to C-terminus: Small ribosomal subunit protein uS12 (123 aa).

The residue at position 89 (Asp-89) is a 3-methylthioaspartic acid.

The protein belongs to the universal ribosomal protein uS12 family. In terms of assembly, part of the 30S ribosomal subunit. Contacts proteins S8 and S17. May interact with IF1 in the 30S initiation complex.

Its function is as follows. With S4 and S5 plays an important role in translational accuracy. In terms of biological role, interacts with and stabilizes bases of the 16S rRNA that are involved in tRNA selection in the A site and with the mRNA backbone. Located at the interface of the 30S and 50S subunits, it traverses the body of the 30S subunit contacting proteins on the other side and probably holding the rRNA structure together. The combined cluster of proteins S8, S12 and S17 appears to hold together the shoulder and platform of the 30S subunit. This chain is Small ribosomal subunit protein uS12, found in Desulfovibrio desulfuricans (strain ATCC 27774 / DSM 6949 / MB).